The chain runs to 763 residues: Pentatricopeptide repeat-containing protein At4g32430, mitochondrial (763 aa).

The N-terminal 38 residues, Met1–Asn38, are a transit peptide targeting the mitochondrion. PPR repeat units lie at residues Asp77–Ser109, Phe110–Pro140, Asp141–Phe172, Asp173–Ser207, Asp208–Lys238, Asp239–Leu274, Asp275–Ser309, Leu310–Ser344, Ser350–Pro370, Asn371–Ser405, Glu406–Arg436, Glu437–Asn471, Glu472–Ser507, Cys508–Lys538, Asn539–Pro573, Asp574–Val604, and Ser610–Gly640. The interval Met645–Gly720 is type E motif. Residues Gly724–Asn756 form a type E(+) motif region.

This sequence belongs to the PPR family. PCMP-E subfamily.

The protein resides in the mitochondrion. This Arabidopsis thaliana (Mouse-ear cress) protein is Pentatricopeptide repeat-containing protein At4g32430, mitochondrial (PCMP-E40).